Here is a 96-residue protein sequence, read N- to C-terminus: U-reduvitoxin-Pr12a (96 aa).

Residues 1 to 20 (MKTALLLFFALVFIAFETEA) form the signal peptide. Cystine bridges form between Cys-21–Cys-38, Cys-33–Cys-53, and Cys-36–Cys-47. Pacifastin domains lie at 21–55 (CRPGALTVAPDGCNMCTCLSNGKLGRCTHDLICPP) and 59–94 (KLECEPGKPFKNDCNDCICSEDGLTAKCTRKLCIHK). The tract at residues 54–56 (PPR) is pro-Pro-Arg motif necessary for proteolytic processing. 3 disulfide bridges follow: Cys-62–Cys-77, Cys-72–Cys-91, and Cys-75–Cys-86.

It belongs to the protease inhibitor I19 family. Expressed by the venom gland.

The protein localises to the secreted. Its function is as follows. Inhibits trypsin activity and prophenoloxidase (PPO) activation, an enzyme essential for both clotting and insect innate immune responses. It does not inhibit activity of chymotrypsin and protease K, and has no effect on phenoloxidase (PO) activity. This is U-reduvitoxin-Pr12a from Platymeris rhadamanthus (Red spot assassin bug).